The chain runs to 124 residues: Small ribosomal subunit protein uS12 (124 aa).

The interval 1–24 (MPTINQLVRQGRKKSVKKTNTPAL) is disordered. A 3-methylthioaspartic acid modification is found at Asp-89.

It belongs to the universal ribosomal protein uS12 family. Part of the 30S ribosomal subunit. Contacts proteins S8 and S17. May interact with IF1 in the 30S initiation complex.

In terms of biological role, with S4 and S5 plays an important role in translational accuracy. Interacts with and stabilizes bases of the 16S rRNA that are involved in tRNA selection in the A site and with the mRNA backbone. Located at the interface of the 30S and 50S subunits, it traverses the body of the 30S subunit contacting proteins on the other side and probably holding the rRNA structure together. The combined cluster of proteins S8, S12 and S17 appears to hold together the shoulder and platform of the 30S subunit. In Desulfotalea psychrophila (strain LSv54 / DSM 12343), this protein is Small ribosomal subunit protein uS12.